Reading from the N-terminus, the 212-residue chain is Pyridoxine/pyridoxamine 5'-phosphate oxidase (212 aa).

FMN is bound by residues 59-64, 74-75, K81, and Q103; these read RMVLMK and YS. K64 is a substrate binding site. Substrate-binding residues include Y121 and R125. Residues 138–139 and W183 contribute to the FMN site; that span reads QS. Residue 189–191 coordinates substrate; the sequence is RLH. Residue R193 coordinates FMN.

The protein belongs to the pyridoxamine 5'-phosphate oxidase family. As to quaternary structure, homodimer. It depends on FMN as a cofactor.

The catalysed reaction is pyridoxamine 5'-phosphate + O2 + H2O = pyridoxal 5'-phosphate + H2O2 + NH4(+). It catalyses the reaction pyridoxine 5'-phosphate + O2 = pyridoxal 5'-phosphate + H2O2. It participates in cofactor metabolism; pyridoxal 5'-phosphate salvage; pyridoxal 5'-phosphate from pyridoxamine 5'-phosphate: step 1/1. It functions in the pathway cofactor metabolism; pyridoxal 5'-phosphate salvage; pyridoxal 5'-phosphate from pyridoxine 5'-phosphate: step 1/1. Its function is as follows. Catalyzes the oxidation of either pyridoxine 5'-phosphate (PNP) or pyridoxamine 5'-phosphate (PMP) into pyridoxal 5'-phosphate (PLP). This is Pyridoxine/pyridoxamine 5'-phosphate oxidase from Rhodopseudomonas palustris (strain HaA2).